The sequence spans 186 residues: ATP synthase subunit delta (186 aa).

This sequence belongs to the ATPase delta chain family. F-type ATPases have 2 components, F(1) - the catalytic core - and F(0) - the membrane proton channel. F(1) has five subunits: alpha(3), beta(3), gamma(1), delta(1), epsilon(1). CF(0) has four main subunits: a(1), b(1), b'(1) and c(10-14). The alpha and beta chains form an alternating ring which encloses part of the gamma chain. F(1) is attached to F(0) by a central stalk formed by the gamma and epsilon chains, while a peripheral stalk is formed by the delta, b and b' chains.

It is found in the cell inner membrane. In terms of biological role, f(1)F(0) ATP synthase produces ATP from ADP in the presence of a proton or sodium gradient. F-type ATPases consist of two structural domains, F(1) containing the extramembraneous catalytic core and F(0) containing the membrane proton channel, linked together by a central stalk and a peripheral stalk. During catalysis, ATP synthesis in the catalytic domain of F(1) is coupled via a rotary mechanism of the central stalk subunits to proton translocation. This protein is part of the stalk that links CF(0) to CF(1). It either transmits conformational changes from CF(0) to CF(1) or is implicated in proton conduction. The chain is ATP synthase subunit delta from Bradyrhizobium sp. (strain BTAi1 / ATCC BAA-1182).